The primary structure comprises 276 residues: Omega-amidase NIT2 (276 aa).

The 245-residue stretch at 4 to 248 (FRLALIQLQI…EAIVYSDIDL (245 aa)) folds into the CN hydrolase domain. S26 bears the Phosphoserine mark. Residue E43 is the Proton acceptor of the active site. K68 is modified (N6-acetyllysine; alternate). An N6-succinyllysine; alternate modification is found at K68. Residue K112 is the Proton donor of the active site. An N6-succinyllysine mark is found at K123 and K130. C153 serves as the catalytic Nucleophile.

In terms of assembly, homodimer. As to expression, detected in fetal brain (at protein level). Ubiquitous. Detected in heart, brain, placenta, lung, liver, skeletal muscle, kidney, pancreas, prostate, spleen, thymus, prostate, testis, ovary, small intestine and colon.

The protein localises to the cytoplasm. The catalysed reaction is a monoamide of a dicarboxylate + H2O = a dicarboxylate + NH4(+). It catalyses the reaction 2-oxoglutaramate + H2O = 2-oxoglutarate + NH4(+). It carries out the reaction 2-oxosuccinamate + H2O = oxaloacetate + NH4(+). Has omega-amidase activity. The role of omega-amidase is to remove potentially toxic intermediates by converting 2-oxoglutaramate and 2-oxosuccinamate to biologically useful 2-oxoglutarate and oxaloacetate, respectively. The protein is Omega-amidase NIT2 (NIT2) of Homo sapiens (Human).